Here is a 347-residue protein sequence, read N- to C-terminus: MITERQRQILNLIVSLYAKEHTPIGSKSLLDSIQASSATIRNDMKVLEKLGLIQKEHTSSGRVPSVSGYKYFVENVIQLDEFSQNDLFKVMKAFDGDFYRLSDLFKTAAKSLSGLTGLTSFVLNAPQRDQQLVSFEMVMLDSHSVLSVITLGTGEVRTNQFILPKSMTEADLAVFSNLVKERLVGKKVIDIHYTLRTEIPQIVQRYFKVTSEVLQLFESIFDDLFKERLTVAGRKNIFDYATDNLAELYKLFSDDERMLHEIREITNNDEMRAVKFDNDEKYMKNLTIISQKFVIPYRGFGTLTVVGPVEMDYQRTLSVLDLVAKVLTMKLSDYYRYLDGNHYEISK.

The protein belongs to the HrcA family.

Its function is as follows. Negative regulator of class I heat shock genes (grpE-dnaK-dnaJ and groELS operons). Prevents heat-shock induction of these operons. This chain is Heat-inducible transcription repressor HrcA, found in Lactococcus lactis subsp. lactis (strain IL1403) (Streptococcus lactis).